Consider the following 375-residue polypeptide: 4-hydroxy-3-methylbut-2-en-1-yl diphosphate synthase (flavodoxin) (375 aa).

[4Fe-4S] cluster is bound by residues C270, C273, C305, and E312.

Belongs to the IspG family. Requires [4Fe-4S] cluster as cofactor.

It carries out the reaction (2E)-4-hydroxy-3-methylbut-2-enyl diphosphate + oxidized [flavodoxin] + H2O + 2 H(+) = 2-C-methyl-D-erythritol 2,4-cyclic diphosphate + reduced [flavodoxin]. It functions in the pathway isoprenoid biosynthesis; isopentenyl diphosphate biosynthesis via DXP pathway; isopentenyl diphosphate from 1-deoxy-D-xylulose 5-phosphate: step 5/6. Functionally, converts 2C-methyl-D-erythritol 2,4-cyclodiphosphate (ME-2,4cPP) into 1-hydroxy-2-methyl-2-(E)-butenyl 4-diphosphate. This Shigella flexneri serotype 5b (strain 8401) protein is 4-hydroxy-3-methylbut-2-en-1-yl diphosphate synthase (flavodoxin).